Reading from the N-terminus, the 156-residue chain is Probable succinate transporter subunit YjjB (156 aa).

4 consecutive transmembrane segments (helical) span residues 7–27, 54–74, 86–106, and 128–148; these read WALL…AMVF, FGMN…VIGI, VFTV…TAMI, and FLKA…PGLW.

The protein belongs to the ThrE exporter (TC 2.A.79) family. In terms of assembly, the transporter is composed of YjjB and YjjP.

It localises to the cell inner membrane. Functionally, involved in succinate export with YjjP. Both proteins are required for export. This is Probable succinate transporter subunit YjjB from Yersinia pseudotuberculosis serotype I (strain IP32953).